We begin with the raw amino-acid sequence, 355 residues long: Endonuclease III homolog (355 aa).

Residues 44 to 50 (PKKFRFQ) carry the Nuclear localization signal motif. The HhH domain occupies 122–149 (FQGDIPDTVEDLMTLPGVGPKMGYLCMS). The active-site Nucleophile; for N-glycosylase activity is Lys142. 4 residues coordinate [4Fe-4S] cluster: Cys210, Cys217, Cys220, and Cys228. The short motif at 252-255 (KKRP) is the Nuclear localization signal element. The interval 303–355 (KEPAADIDVDQKPPVAFHSTTKETRSLRRSKRVAKKSSQYFSQQSLQDIEDLV) is disordered. Positions 338–349 (KSSQYFSQQSLQ) are enriched in polar residues.

Belongs to the Nth/MutY family. [4Fe-4S] cluster serves as cofactor.

The protein resides in the nucleus. It localises to the mitochondrion. It catalyses the reaction 2'-deoxyribonucleotide-(2'-deoxyribose 5'-phosphate)-2'-deoxyribonucleotide-DNA = a 3'-end 2'-deoxyribonucleotide-(2,3-dehydro-2,3-deoxyribose 5'-phosphate)-DNA + a 5'-end 5'-phospho-2'-deoxyribonucleoside-DNA + H(+). Its function is as follows. Bifunctional DNA N-glycosylase with associated apurinic/apyrimidinic (AP) lyase function that catalyzes the first step in base excision repair (BER), the primary repair pathway for the repair of oxidative DNA damage. The DNA N-glycosylase activity releases the damaged DNA base from DNA by cleaving the N-glycosidic bond, leaving an AP site. The AP-lyase activity cleaves the phosphodiester bond 3' to the AP site by a beta-elimination. Primarily recognizes and repairs oxidative base damage of pyrimidines. Also has 8-oxo-7,8-dihydroguanine (8-oxoG) DNA glycosylase activity. Also involved in the repair of 7-methylguanine lesions, although it cannot directly repair alkylated DNA bases. Probably does so via excision of methylformamidopyrimidine (mFapy) lesions, a spontaneous processing product of 7-methylguanine. This Schizosaccharomyces pombe (strain 972 / ATCC 24843) (Fission yeast) protein is Endonuclease III homolog (nth1).